Consider the following 210-residue polypeptide: MAEQSSRNLDTGRAGIILAGGRSRRFDGIDKATAPVGGRPMIHRVAASLDPAVDELVINCRADQRDTFAAALSDFDVRFAEDSHPDHGPVFGLRTAVRASNAEYAAILPCDMPLVPTGFISHLFGRVQGGTGVIPSVSETPVPLPSVVHCRAGEVACTETIRAGSDRLKDVMSTLGVNVLDGREVQAHAGLDAFSNVNTIDDLRALSSRR.

Residues Leu-18–Gly-20, Lys-31, Asn-59, Asp-86, and Asp-111 each bind GTP. Asp-111 serves as a coordination point for Mg(2+).

It belongs to the MobA family. Mg(2+) serves as cofactor.

It localises to the cytoplasm. The catalysed reaction is Mo-molybdopterin + GTP + H(+) = Mo-molybdopterin guanine dinucleotide + diphosphate. Transfers a GMP moiety from GTP to Mo-molybdopterin (Mo-MPT) cofactor (Moco or molybdenum cofactor) to form Mo-molybdopterin guanine dinucleotide (Mo-MGD) cofactor. The polypeptide is Probable molybdenum cofactor guanylyltransferase (nasC) (Haloferax mediterranei (strain ATCC 33500 / DSM 1411 / JCM 8866 / NBRC 14739 / NCIMB 2177 / R-4) (Halobacterium mediterranei)).